Consider the following 449-residue polypeptide: Allantoinase (449 aa).

Zn(2+)-binding residues include His-61, His-63, Lys-148, His-184, His-240, and Asp-313. Lys-148 is modified (N6-carboxylysine).

This sequence belongs to the metallo-dependent hydrolases superfamily. Allantoinase family. In terms of assembly, homotetramer. The cofactor is Zn(2+). In terms of processing, carboxylation allows a single lysine to coordinate two zinc ions.

It carries out the reaction (S)-allantoin + H2O = allantoate + H(+). Its pathway is nitrogen metabolism; (S)-allantoin degradation; allantoate from (S)-allantoin: step 1/1. Catalyzes the conversion of allantoin (5-ureidohydantoin) to allantoic acid by hydrolytic cleavage of the five-member hydantoin ring. The sequence is that of Allantoinase from Desulfitobacterium hafniense (strain Y51).